A 1013-amino-acid chain; its full sequence is GPI ethanolamine phosphate transferase 3 (1013 aa).

A helical membrane pass occupies residues 41–61 (TLYIFLYSALAALQFIAIAFF). N-linked (GlcNAc...) asparagine glycans are attached at residues N184, N205, N336, N399, and N423. The next 3 membrane-spanning stretches (helical) occupy residues 447 to 467 (YYSIGTGIILLIISLAMLITI), 484 to 504 (VPTIIVMPLVSNVCFLGVFYV), and 515 to 535 (LWASLLATAVGIIIGFYVPIF). N-linked (GlcNAc...) asparagine glycosylation occurs at N539. Helical transmembrane passes span 558–578 (VAAFLITLHALIFTSNSFTIW), 582–602 (IVSFSLTTLGMLTLYEFVFLP), 643–663 (IVGGYHSIVLIVCTRLASLIT), and 682–702 (NYSFSVMLGCLFLVFATPACI). N707 is a glycosylation site (N-linked (GlcNAc...) asparagine). The chain crosses the membrane as a helical span at residues 715 to 735 (AAPIWIGMLMKSILFVNFIYW). Residues N742, N750, and N755 are each glycosylated (N-linked (GlcNAc...) asparagine). 7 helical membrane passes run 761–781 (IVVGVSLVAANIGWMMGPLCI), 802–822 (NAYGAQYFLLVINFFMCILLF), 825–845 (PLAQLSLFLMCNQLLSILEIF), 868–888 (FFSTGHQATIPAVQWDMGFIL), 899–919 (LGIVLNTFGPHILCGISVALL), 943–963 (GMLLIYQTVLCLSTFIWVTNF), and 977–997 (FMFAALSLIVTQLVLTFITIA).

It belongs to the PIGG/PIGN/PIGO family. PIGO subfamily.

The protein localises to the endoplasmic reticulum membrane. Its pathway is glycolipid biosynthesis; glycosylphosphatidylinositol-anchor biosynthesis. Its function is as follows. Involved in glycosylphosphatidylinositol-anchor biosynthesis. Transfers ethanolamine phosphate to the GPI third mannose which links the GPI-anchor to the C-terminus of the proteins by an amide bond. Involved in cell wall biosynthesis. The chain is GPI ethanolamine phosphate transferase 3 (GPI13) from Eremothecium gossypii (strain ATCC 10895 / CBS 109.51 / FGSC 9923 / NRRL Y-1056) (Yeast).